The sequence spans 252 residues: Geranylgeranylglyceryl phosphate synthase (252 aa).

Positions 22 and 51 each coordinate Mg(2+). Sn-glycerol 1-phosphate-binding positions include 170–176 (YFEAGSG), 201–202 (GG), and 223–224 (GS).

It belongs to the GGGP/HepGP synthase family. Group II subfamily. Mg(2+) is required as a cofactor.

The protein resides in the cytoplasm. It catalyses the reaction sn-glycerol 1-phosphate + (2E,6E,10E)-geranylgeranyl diphosphate = sn-3-O-(geranylgeranyl)glycerol 1-phosphate + diphosphate. It participates in membrane lipid metabolism; glycerophospholipid metabolism. Functionally, prenyltransferase that catalyzes the transfer of the geranylgeranyl moiety of geranylgeranyl diphosphate (GGPP) to the C3 hydroxyl of sn-glycerol-1-phosphate (G1P). This reaction is the first ether-bond-formation step in the biosynthesis of archaeal membrane lipids. The protein is Geranylgeranylglyceryl phosphate synthase of Thermoplasma volcanium (strain ATCC 51530 / DSM 4299 / JCM 9571 / NBRC 15438 / GSS1).